We begin with the raw amino-acid sequence, 358 residues long: DnaJ homolog subfamily C member 18 (358 aa).

The J domain occupies 82-146 (NYYEILGVSR…DKRLRYDEYG (65 aa)). The chain crosses the membrane as a helical span at residues 228-248 (AFIQLLPVLVIVIISVITQLL).

The protein localises to the endoplasmic reticulum membrane. This is DnaJ homolog subfamily C member 18 (DNAJC18) from Macaca fascicularis (Crab-eating macaque).